The following is a 332-amino-acid chain: PTS-dependent dihydroxyacetone kinase, dihydroxyacetone-binding subunit DhaK (332 aa).

Residues 9–331 enclose the DhaK domain; it reads QPQDVVSEML…LNEDVKTISW (323 aa). Dihydroxyacetone contacts are provided by residues 55-58, Lys106, and Asp111; that span reads GSGH. The active-site Proton acceptor is His58. His220 serves as the catalytic Tele-hemiaminal-histidine intermediate.

In terms of assembly, homodimer. The dihydroxyacetone kinase complex is composed of a homodimer of DhaM, a homodimer of DhaK and the subunit DhaL.

It carries out the reaction dihydroxyacetone + phosphoenolpyruvate = dihydroxyacetone phosphate + pyruvate. The protein operates within polyol metabolism; glycerol degradation. In terms of biological role, dihydroxyacetone binding subunit of the dihydroxyacetone kinase, which is responsible the phosphoenolpyruvate (PEP)-dependent phosphorylation of dihydroxyacetone via a phosphoryl group transfer from DhaL-ATP. In Lactococcus lactis subsp. lactis (strain IL1403) (Streptococcus lactis), this protein is PTS-dependent dihydroxyacetone kinase, dihydroxyacetone-binding subunit DhaK.